The chain runs to 544 residues: Protein kinase dsk1 (544 aa).

The Protein kinase domain occupies Y81 to L516. ATP is bound by residues L87 to V95 and K110. The active-site Proton acceptor is the D214. Disordered stretches follow at residues P235–F299 and I316–L341. The span at T237–T254 shows a compositional bias: low complexity. Polar residues-rich tracts occupy residues K281–F299 and H327–N337.

Belongs to the protein kinase superfamily. Ser/Thr protein kinase family. Post-translationally, phosphorylated on Ser residue(s).

The protein resides in the cytoplasm. It is found in the nucleus. It carries out the reaction L-seryl-[protein] + ATP = O-phospho-L-seryl-[protein] + ADP + H(+). The enzyme catalyses L-threonyl-[protein] + ATP = O-phospho-L-threonyl-[protein] + ADP + H(+). Functionally, may play an important role in mitotic control by altering cellular location, degree of phosphorylation and kinase activity. Abundant expression accelerates the exit when cells are in M-phase and also delays the entry into mitosis when cells are in G2. Phosphorylates prp2 in vitro and so may have a role in co-ordinating pre-mRNA splicing with the progression of the cell division cycle. In Schizosaccharomyces pombe (strain 972 / ATCC 24843) (Fission yeast), this protein is Protein kinase dsk1 (dsk1).